A 394-amino-acid polypeptide reads, in one-letter code: Ornithine aminotransferase 1 (394 aa).

Lys252 carries the post-translational modification N6-(pyridoxal phosphate)lysine.

The protein belongs to the class-III pyridoxal-phosphate-dependent aminotransferase family. OAT subfamily. It depends on pyridoxal 5'-phosphate as a cofactor.

It localises to the cytoplasm. The enzyme catalyses a 2-oxocarboxylate + L-ornithine = L-glutamate 5-semialdehyde + an L-alpha-amino acid. It functions in the pathway amino-acid biosynthesis; L-proline biosynthesis; L-glutamate 5-semialdehyde from L-ornithine: step 1/1. Functionally, catalyzes the interconversion of ornithine to glutamate semialdehyde. This chain is Ornithine aminotransferase 1, found in Staphylococcus aureus (strain COL).